A 142-amino-acid polypeptide reads, in one-letter code: Small ribosomal subunit protein uS12 (142 aa).

Belongs to the universal ribosomal protein uS12 family. As to quaternary structure, part of the 30S ribosomal subunit.

Its function is as follows. With S4 and S5 plays an important role in translational accuracy. Located at the interface of the 30S and 50S subunits. This chain is Small ribosomal subunit protein uS12, found in Methanoregula boonei (strain DSM 21154 / JCM 14090 / 6A8).